Here is a 1642-residue protein sequence, read N- to C-terminus: MATDGASCEPDFSRAPEDAAGAPAEAAKKEFDVDTLSKSELRMLLSVMEGELEARDLVIEALRARRKEVFIQERYGRFNLNDPFLALQRDYEAGASDKEKKPVCTNPLSILEAVMAHCRKMQERMSTQLAAAESRQKKLEMEKLQLQALEQEHKKLAARLEEERGKNKHVVLMLVKECKQLSGKVLEEAQKLEEVMAKLEEEKKKTSALEEELATEKRRSTEMEAQMEKQLSEFDTEREQLRAKLHREEAHTADLKEEIDKMKKMIEQLKRGTDSKPGLSLPRKTKDRRSISISVATEGPMTRSVACQTDLVMESAEPVKKLPLTVPVKPAAGSPPVAAGAKGNACASAAAVRPGVERQVSHGDLIGASLPAAPPPSANRIEENGPSTGSTADLTSSPTPVPSTVSPASGHTPAPPPHSLHSPCANAPLHPGLNPRIQAARFRFQGSNANDPDQNGNTTQSPPSRDVSPTSRDNLVAKQLARNTVTQALSRFTSPPAGAPPRPGAPPTGDVGTYPPVGRTSLKTPGGARVDRGNPPPIPPKKPGLSQTPSPPHPQLKVIMDSSRASSTGIKADNKTVASPPSTLPQGNRVMNEENLSKSSSPQLPPKPSIDLTVAPAGCAVSALATSQVGAWPAETPGLNQSACSERSLVIPTTTASSSSIHPVNASSRRAGASDSLLVTASGWSPSLTPLLMSGGPAPLAGRPTLLQQAAAQGNVTLLSMLLNEEGLDINYSCEDGHSALYSAAKNGHTDCVRLLLNAEAQVNAADKNGFTPLCAAAAQGHFKCVELLIAYDANINHAADGGQTPLYLACKNGNKECIKLLLEAGTDRSVKTRDGWTPIHAAVDTGNVDSLKLLMYHRAPAHGNKLREEPGLAIFDLDQEEERHEGTSKPVVPADLINHADSEGWTAAHIAASKGFKNCLEVLCRHGGLEPERRDKCNRTAHDVATDDCKHLLENLNALKIPLRISVGEIEPGNYGADDFECENTICALNIRKQTSWDDFSKAVSQALTNHFQAISSDGWWSLEDMTFNSTTDSSIGLSASSVRSITLGTVPWSAGQSFAQSPWDFVRTNKAEQVTVLLSGPQEGCLSSVTYASMIPLQMLQNYLRLVEQYHNVIFHGPEGSLQDYITHQLALCLKHRQMTAGFPCEIVRAEVDADFSKEQLVDLFISSACLIPVKQSPANKKIIVILENLEKSSLSELLGDFLGPLENHSTESPCTFQKGNGTSECYYFHENCFLMGTIAKACLQGSDLLVQQHFRWVQLRWDGEPMQGLLRRFLRRKVVNKFRGQVPSPCDPVCKTVDWALAVWRQLNSCLARLGTPEALLGPKYFLSCPVIPGHAQATVKWMSKLWNAVIAPRVQEAILSRASVKRQPGLGQTTKNPSQGQQAVVRAALSILLNKAVLHGCPLQRAELDQHTADFKGGSFPLSIVSSYSSCNKKKESGAWRKVSTSPRKKSGRFSSPTWNKPDLSEEGIKSNTILQLNCNRNASLSNQKSLENDLSLTLNLDQRLSLGSDDEADLVKELQSMCSSKSESDISKIADSRDDLRRFDSSGNNPVFSATVNNPRMPVSQKEVSPLSSHQTTECSNSKSKTELGVSRVKSFLPVPRSKVTQCSQNTKRSSSSSNTRQIEINNNSRDLEPTQK.

5 disordered regions span residues 1–27, 203–222, 366–433, 446–471, and 491–611; these read MATDGASCEPDFSRAPEDAAGAPAEAA, KKKTSALEEELATEKRRSTE, IGAS…HPGL, GSNANDPDQNGNTTQSPPSRDVSPTS, and RFTS…PSID. The stretch at 119 to 276 forms a coiled coil; it reads RKMQERMSTQ…EQLKRGTDSK (158 aa). Over residues 385–394 the composition is skewed to polar residues; the sequence is GPSTGSTADL. Residues 395–407 are compositionally biased toward low complexity; that stretch reads TSSPTPVPSTVSP. Arg491 is subject to Asymmetric dimethylarginine. The span at 497 to 506 shows a compositional bias: pro residues; that stretch reads AGAPPRPGAP. Polar residues predominate over residues 576-586; sequence TVASPPSTLPQ. 6 ANK repeats span residues 702–732, 736–765, 769–798, 802–831, 835–864, and 904–934; these read GRPTLLQQAAAQGNVTLLSMLLNEEGLDINY, DGHSALYSAAKNGHTDCVRLLLNAEAQVNA, NGFTPLCAAAAQGHFKCVELLIAYDANINH, GGQTPLYLACKNGNKECIKLLLEAGTDRSV, DGWTPIHAAVDTGNVDSLKLLMYHRAPAHG, and EGWTAAHIAASKGFKNCLEVLCRHGGLEPER. The tract at residues 1441–1469 is disordered; it reads SGAWRKVSTSPRKKSGRFSSPTWNKPDLS. Ser1513 bears the Phosphoserine mark. Positions 1545 to 1642 are disordered; that stretch reads LRRFDSSGNN…NSRDLEPTQK (98 aa). Composition is skewed to polar residues over residues 1552–1563 and 1571–1588; these read GNNPVFSATVNN and KEVSPLSSHQTTECSNSK. Residues 1613–1627 are compositionally biased toward low complexity; that stretch reads SQNTKRSSSSSNTRQ.

Interacts with CTTN/cortactin SH3 domain. Interacts with STRN, STRN4/zinedin and MOB4/phocein; this interactions mediate the association with the STRIPAK core complex and may regulate dendritic spine distribution of the STRIPAK complex in hippocampal neurons. Activation of glutamate receptors weakens the interaction with STRN and STRN4.

The protein resides in the cytoplasm. It localises to the cell cortex. The protein localises to the cell projection. Its subcellular location is the dendritic spine. Regulates the dendritic spine distribution of CTTN/cortactin in hippocampal neurons, and thus controls dendritic spinogenesis and dendritic spine maintenance. Associates with the striatin-interacting phosphatase and kinase (STRIPAK) core complex to regulate dendritic spine distribution of the STRIPAK complex in hippocampal neurons. The protein is Cortactin-binding protein 2 (CTTNBP2) of Muntiacus muntjak (Barking deer).